The sequence spans 439 residues: Ribosomal protein uS12 methylthiotransferase RimO (439 aa).

The MTTase N-terminal domain occupies 7–119; sequence KQLCLISLGC…IDIMIAKKQN (113 aa). 6 residues coordinate [4Fe-4S] cluster: C16, C50, C82, C151, C155, and C158. The Radical SAM core domain maps to 137 to 368; the sequence is TGSSVHAYVK…ALKHQNHSFK (232 aa).

Belongs to the methylthiotransferase family. RimO subfamily. The cofactor is [4Fe-4S] cluster.

The protein localises to the cytoplasm. The catalysed reaction is L-aspartate(89)-[ribosomal protein uS12]-hydrogen + (sulfur carrier)-SH + AH2 + 2 S-adenosyl-L-methionine = 3-methylsulfanyl-L-aspartate(89)-[ribosomal protein uS12]-hydrogen + (sulfur carrier)-H + 5'-deoxyadenosine + L-methionine + A + S-adenosyl-L-homocysteine + 2 H(+). Functionally, catalyzes the methylthiolation of an aspartic acid residue of ribosomal protein uS12. The sequence is that of Ribosomal protein uS12 methylthiotransferase RimO from Helicobacter pylori (strain P12).